The chain runs to 414 residues: 5-aminolevulinate synthase (414 aa).

Residues R22, S133, and K152 each coordinate substrate. Pyridoxal 5'-phosphate-binding residues include S185, H213, and T241. K244 is an active-site residue. At K244 the chain carries N6-(pyridoxal phosphate)lysine. 2 residues coordinate pyridoxal 5'-phosphate: T273 and T274. Substrate is bound at residue T359.

Belongs to the class-II pyridoxal-phosphate-dependent aminotransferase family. As to quaternary structure, homodimer. Requires pyridoxal 5'-phosphate as cofactor.

The catalysed reaction is succinyl-CoA + glycine + H(+) = 5-aminolevulinate + CO2 + CoA. It participates in porphyrin-containing compound metabolism; protoporphyrin-IX biosynthesis; 5-aminolevulinate from glycine: step 1/1. The protein is 5-aminolevulinate synthase (hemA) of Rickettsia prowazekii (strain Madrid E).